The following is a 176-amino-acid chain: Ribosome maturation factor RimM (176 aa).

Residues 97–176 (GDEFYWRELV…TIQVDWDPSF (80 aa)) enclose the PRC barrel domain.

It belongs to the RimM family. In terms of assembly, binds ribosomal protein uS19.

It localises to the cytoplasm. Its function is as follows. An accessory protein needed during the final step in the assembly of 30S ribosomal subunit, possibly for assembly of the head region. Essential for efficient processing of 16S rRNA. May be needed both before and after RbfA during the maturation of 16S rRNA. It has affinity for free ribosomal 30S subunits but not for 70S ribosomes. This Pseudoalteromonas atlantica (strain T6c / ATCC BAA-1087) protein is Ribosome maturation factor RimM.